The following is a 133-amino-acid chain: Large ribosomal subunit protein bL12 (133 aa).

It belongs to the bacterial ribosomal protein bL12 family. In terms of assembly, homodimer. Part of the ribosomal stalk of the 50S ribosomal subunit. Forms a multimeric L10(L12)X complex, where L10 forms an elongated spine to which 2 to 4 L12 dimers bind in a sequential fashion. Binds GTP-bound translation factors.

In terms of biological role, forms part of the ribosomal stalk which helps the ribosome interact with GTP-bound translation factors. Is thus essential for accurate translation. In Ehrlichia chaffeensis (strain ATCC CRL-10679 / Arkansas), this protein is Large ribosomal subunit protein bL12.